The sequence spans 196 residues: Transmembrane protein 126A (196 aa).

Residues 1–34 (MESHKPSTNKDDLIFNIIPRKIKQLPESDRNLLE) are Mitochondrial matrix-facing. A helical membrane pass occupies residues 35 to 55 (YGSAYIGLNAAFGGLIANSLF). Over 56 to 57 (RR) the chain is Mitochondrial intermembrane. Residues 58-78 (ILNVTQARVASSLPMAVIPFL) traverse the membrane as a helical segment. Residues 79-106 (TANLSYHSFVSLPLSTGNLNCEICTTTR) lie on the Mitochondrial matrix side of the membrane. A helical membrane pass occupies residues 107-127 (GTLVGFVLGGLYPILLAIPVN). The Mitochondrial intermembrane portion of the chain corresponds to 128 to 159 (GGLAARYESSPLPQRGNIFNYWITISKPVFRK). Residues 160–176 (MLFPTLLQTAFAAYLGS) form a helical membrane-spanning segment. Topologically, residues 177–196 (RQYKLLIKALQLPEPDLEIQ) are mitochondrial matrix.

It belongs to the TMEM126 family. In terms of assembly, interacts with OXA1L; promoting cotranslational quality control in mitochondria.

It localises to the mitochondrion inner membrane. Its function is as follows. Protein required for the cotranslational protein quality control in the inner membrane of the mitochondria. Associates with newly synthesized polypeptides and may act as a chaperone that cooperates with OXA1L for the insertion of newly synthesized mitochondrial proteins into the inner membrane. Required for the assembly of the ND4 module of mitochondrial complex I. This chain is Transmembrane protein 126A (Tmem126a), found in Rattus norvegicus (Rat).